The primary structure comprises 317 residues: DNA repair nuclease/redox regulator APEX1 (317 aa).

Residues 1-32 (MPKRGKRAAAEDGEEPKSEPETKKSKGAAKKT) form a necessary for interaction with YBX1, binding to RNA, association together with NPM1 to rRNA, endoribonuclease activity on abasic RNA and localization in the nucleoli region. A disordered region spans residues 1–57 (MPKRGKRAAAEDGEEPKSEPETKKSKGAAKKTEKEAAGEGPVLYEDPPDQKTSASGK). Residue Lys6 is modified to N6-acetyllysine; by EP300. The Nuclear localization signal (NLS) motif lies at 8-12 (AAAED). Positions 15–37 (EPKSEPETKKSKGAAKKTEKEAA) are enriched in basic and acidic residues. Ser18 is subject to Phosphoserine. Residues 22–32 (TKKSKGAAKKT) are necessary for interaction with NPM1 and for efficient rRNA binding. Residues Lys26, Lys30, Lys31, and Lys34 each carry the N6-acetyllysine modification. A Phosphoserine modification is found at Ser53. The short motif at 63-79 (ICSWNVDGLRAWIKKKG) is the Nuclear export signal (NES) element. Cys64 carries the S-nitrosocysteine; alternate modification. Cys64 and Cys92 are joined by a disulfide. Asp69 lines the Mg(2+) pocket. Position 92 is an S-nitrosocysteine; alternate (Cys92). Glu95 is a Mg(2+) binding site. The active site involves Tyr170. Lys196 is subject to N6-acetyllysine. Mg(2+) is bound by residues Asp209 and Asn211. Asp209 functions as the Proton donor/acceptor in the catalytic mechanism. At Thr232 the chain carries Phosphothreonine; by CDK5. Residues 288-317 (HSLLPALCDSKIRSKALGSDHCPITLYLAL) are mitochondrial targeting sequence (MTS). Asp307 contacts Mg(2+). The residue at position 309 (Cys309) is an S-nitrosocysteine.

This sequence belongs to the DNA repair enzymes AP/ExoA family. As to quaternary structure, monomer. Homodimer; disulfide-linked. Component of the SET complex, composed of at least APEX1, SET, ANP32A, HMGB2, NME1 and TREX1. Associates with the dimer XRCC5/XRCC6 in a DNA-dependent manner. Interacts with SIRT1; the interaction is increased in the context of genotoxic stress. Interacts with HDAC1, HDAC2 and HDAC3; the interactions are not dependent on the APEX1 acetylation status. Interacts with XRCC1; the interaction is induced by SIRT1 and increased with the APEX1 acetylated form. Interacts with NPM1 (via N-terminal domain); the interaction is RNA-dependent and decreases in hydrogen peroxide-damaged cells. Interacts (via N-terminus) with YBX1 (via C-terminus); the interaction is increased in presence of APEX1 acetylated. Interacts with HNRNPL; the interaction is DNA-dependent. Interacts (via N-terminus) with KPNA1 and KPNA2. Interacts with TXN; the interaction stimulates the FOS/JUN AP-1 complex DNA-binding activity in a redox-dependent manner. Interacts with GZMA, KRT8, MDM2, POLB, PRDX6, PRPF19, RPLP0, TOMM20 and WDR77. Binds to CDK5. It depends on Mg(2+) as a cofactor. Mn(2+) is required as a cofactor. In terms of processing, phosphorylated. Phosphorylation by kinase PKC or casein kinase CK2 results in enhanced redox activity that stimulates binding of the FOS/JUN AP-1 complex to its cognate binding site. AP-endodeoxyribonuclease activity is not affected by CK2-mediated phosphorylation. Phosphorylation of Thr-232 by CDK5 in response to MPP(+)/MPTP (1-methyl-4-phenylpyridinium) reduces AP-endodeoxyribonuclease activity resulting in accumulation of DNA damage and contributing to neuronal death. Post-translationally, acetylated on Lys-6. Acetylation is increased by the transcriptional coactivator EP300 acetyltransferase, genotoxic agents like H(2)O(2) and methyl methanesulfonate (MMS). Acetylation increases its binding affinity to the negative calcium response element (nCaRE) DNA promoter. The acetylated form induces a stronger binding of YBX1 to the Y-box sequence in the MDR1 promoter than the unacetylated form. Deacetylated on lysines. Lys-6 is deacetylated by SIRT1. Cleaved at Lys-30 by granzyme A to create the mitochondrial form; leading in reduction of binding to DNA, AP endodeoxyribonuclease activity, redox activation of transcription factors and to enhanced cell death. Cleaved by granzyme K; leading to intracellular ROS accumulation and enhanced cell death after oxidative stress. In terms of processing, cys-64 and Cys-92 are nitrosylated in response to nitric oxide (NO) and lead to the exposure of the nuclear export signal (NES). Post-translationally, ubiquitinated by MDM2; leading to translocation to the cytoplasm and proteasomal degradation.

It is found in the nucleus. The protein localises to the nucleolus. The protein resides in the nucleus speckle. Its subcellular location is the endoplasmic reticulum. It localises to the cytoplasm. It is found in the mitochondrion. The enzyme catalyses a deoxyribonucleotide-2'-deoxyribose-5'-monophosphate-DNA + H2O = a 5'-end 2'-deoxyribose-5'-monophosphate-DNA + a 3'-end 2'-deoxyribonucleotide-DNA + H(+). It carries out the reaction Exonucleolytic cleavage in the 3'- to 5'-direction to yield nucleoside 5'-phosphates.. It catalyses the reaction a 3'-end 2'-deoxyribonucleotide-3'-phosphoglycolate-DNA + H2O = 2-phosphoglycolate + a 3'-end 2'-deoxyribonucleotide-DNA + H(+). The catalysed reaction is a 3'-end 2'-deoxyribonucleotide-8-oxoguanine-DNA + H2O = 8-oxo-dGMP + a 3'-end 2'-deoxyribonucleotide-DNA + H(+). With respect to regulation, NPM1 stimulates endodeoxyribonuclease activity on double-stranded DNA with AP sites, but inhibits endoribonuclease activity on single-stranded RNA containing AP sites. In terms of biological role, multifunctional protein that plays a central role in the cellular response to oxidative stress. The two major activities of APEX1 are DNA repair and redox regulation of transcriptional factors. Functions as an apurinic/apyrimidinic (AP) endodeoxyribonuclease in the base excision repair (BER) pathway of DNA lesions induced by oxidative and alkylating agents. Initiates repair of AP sites in DNA by catalyzing hydrolytic incision of the phosphodiester backbone immediately adjacent to the damage, generating a single-strand break with 5'-deoxyribose phosphate and 3'-hydroxyl ends. Also incises at AP sites in the DNA strand of DNA/RNA hybrids, single-stranded DNA regions of R-loop structures, and single-stranded RNA molecules. Operates at switch sites of immunoglobulin (Ig) constant regions where it mediates Ig isotype class switch recombination. Processes AP sites induced by successive action of AICDA and UNG. Generates staggered nicks in opposite DNA strands resulting in the formation of double-strand DNA breaks that are finally resolved via non-homologous end joining repair pathway. Has 3'-5' exodeoxyribonuclease activity on mismatched deoxyribonucleotides at the 3' termini of nicked or gapped DNA molecules during short-patch BER. Possesses DNA 3' phosphodiesterase activity capable of removing lesions (such as phosphoglycolate and 8-oxoguanine) blocking the 3' side of DNA strand breaks. Also acts as an endoribonuclease involved in the control of single-stranded RNA metabolism. Plays a role in regulating MYC mRNA turnover by preferentially cleaving in between UA and CA dinucleotides of the MYC coding region determinant (CRD). In association with NMD1, plays a role in the rRNA quality control process during cell cycle progression. Acts as a loading factor for POLB onto non-incised AP sites in DNA and stimulates the 5'-terminal deoxyribose 5'-phosphate (dRp) excision activity of POLB. Exerts reversible nuclear redox activity to regulate DNA binding affinity and transcriptional activity of transcriptional factors by controlling the redox status of their DNA-binding domain, such as the FOS/JUN AP-1 complex after exposure to IR. Involved in calcium-dependent down-regulation of parathyroid hormone (PTH) expression by binding to negative calcium response elements (nCaREs). Together with HNRNPL or the dimer XRCC5/XRCC6, associates with nCaRE, acting as an activator of transcriptional repression. May also play a role in the epigenetic regulation of gene expression by participating in DNA demethylation. Stimulates the YBX1-mediated MDR1 promoter activity, when acetylated at Lys-6 and Lys-7, leading to drug resistance. Plays a role in protection from granzyme-mediated cellular repair leading to cell death. Binds DNA and RNA. Associates, together with YBX1, on the MDR1 promoter. Together with NPM1, associates with rRNA. The chain is DNA repair nuclease/redox regulator APEX1 (Apex1) from Rattus norvegicus (Rat).